The following is a 424-amino-acid chain: CinA-like protein (424 aa).

Belongs to the CinA family.

The polypeptide is CinA-like protein (Shewanella piezotolerans (strain WP3 / JCM 13877)).